A 512-amino-acid polypeptide reads, in one-letter code: Probable pectinesterase/pectinesterase inhibitor 54 (512 aa).

The N-terminal stretch at 1 to 24 (MGVIDMVLFWVLLVNALLIVDASS) is a signal peptide. The pectinesterase inhibitor 54 stretch occupies residues 29 to 193 (FAYQNEMQRH…SRLVSNSLTL (165 aa)). Residues N71 and N131 are each glycosylated (N-linked (GlcNAc...) asparagine). Positions 229 to 496 (HVVVAKDGSG…FSVVKRRNGE (268 aa)) are pectinesterase 54. Residue Q302 coordinates substrate. Catalysis depends on D325, which acts as the Proton donor; for pectinesterase activity. Cysteines 339 and 359 form a disulfide. D346 functions as the Nucleophile; for pectinesterase activity in the catalytic mechanism. The substrate site is built by R415 and W417.

It in the N-terminal section; belongs to the PMEI family. In the C-terminal section; belongs to the pectinesterase family. In terms of tissue distribution, expressed in siliques.

The protein localises to the secreted. The protein resides in the cell wall. The catalysed reaction is [(1-&gt;4)-alpha-D-galacturonosyl methyl ester](n) + n H2O = [(1-&gt;4)-alpha-D-galacturonosyl](n) + n methanol + n H(+). It functions in the pathway glycan metabolism; pectin degradation; 2-dehydro-3-deoxy-D-gluconate from pectin: step 1/5. Acts in the modification of cell walls via demethylesterification of cell wall pectin. The protein is Probable pectinesterase/pectinesterase inhibitor 54 (PME54) of Arabidopsis thaliana (Mouse-ear cress).